The sequence spans 388 residues: Formate-dependent phosphoribosylglycinamide formyltransferase (388 aa).

N(1)-(5-phospho-beta-D-ribosyl)glycinamide contacts are provided by residues 20-21 (EL) and Glu80. Residues Arg112, Lys153, 158–163 (SSGKGQ), 193–196 (EEFV), and Glu201 contribute to the ATP site. Residues 117–306 (RLASEKLGLR…EFEIHVRSIL (190 aa)) form the ATP-grasp domain. Residues Glu265 and Glu277 each coordinate Mg(2+). N(1)-(5-phospho-beta-D-ribosyl)glycinamide-binding positions include Asp284, Lys352, and 359–360 (RR).

This sequence belongs to the PurK/PurT family. Homodimer.

The enzyme catalyses N(1)-(5-phospho-beta-D-ribosyl)glycinamide + formate + ATP = N(2)-formyl-N(1)-(5-phospho-beta-D-ribosyl)glycinamide + ADP + phosphate + H(+). Its pathway is purine metabolism; IMP biosynthesis via de novo pathway; N(2)-formyl-N(1)-(5-phospho-D-ribosyl)glycinamide from N(1)-(5-phospho-D-ribosyl)glycinamide (formate route): step 1/1. Functionally, involved in the de novo purine biosynthesis. Catalyzes the transfer of formate to 5-phospho-ribosyl-glycinamide (GAR), producing 5-phospho-ribosyl-N-formylglycinamide (FGAR). Formate is provided by PurU via hydrolysis of 10-formyl-tetrahydrofolate. In Methanococcus vannielii (strain ATCC 35089 / DSM 1224 / JCM 13029 / OCM 148 / SB), this protein is Formate-dependent phosphoribosylglycinamide formyltransferase.